A 307-amino-acid chain; its full sequence is Deaminated glutathione amidase, chloroplastic/cytosolic (307 aa).

The N-terminal 36 residues, Met1–Thr36, are a transit peptide targeting the chloroplast. Positions Val37 to Phe286 constitute a CN hydrolase domain. Glu76 (proton acceptor) is an active-site residue. Catalysis depends on Lys147, which acts as the Proton donor. Cys188 functions as the Nucleophile in the catalytic mechanism.

This sequence belongs to the nitrilase superfamily. NIT1/NIT2 family.

It is found in the plastid. It localises to the chloroplast. The protein resides in the cytoplasm. The enzyme catalyses N-(4-oxoglutaryl)-L-cysteinylglycine + H2O = L-cysteinylglycine + 2-oxoglutarate. The catalysed reaction is N-(4-carboxy-4-oxobutanoyl)-L-ethylglycylglycine + H2O = N-(2-aminobutanoyl)glycine + 2-oxoglutarate. Its function is as follows. Catalyzes the hydrolysis of the amide bond in N-(4-oxoglutarate)-L-cysteinylglycine (deaminated glutathione), a metabolite repair reaction to dispose of the harmful deaminated glutathione. Possesses amidase activity toward deaminated ophthalmate in vitro. The sequence is that of Deaminated glutathione amidase, chloroplastic/cytosolic from Arabidopsis thaliana (Mouse-ear cress).